The sequence spans 355 residues: Peptide chain release factor 1 (355 aa).

Position 233 is an N5-methylglutamine (Q233).

The protein belongs to the prokaryotic/mitochondrial release factor family. In terms of processing, methylated by PrmC. Methylation increases the termination efficiency of RF1.

It localises to the cytoplasm. Peptide chain release factor 1 directs the termination of translation in response to the peptide chain termination codons UAG and UAA. The protein is Peptide chain release factor 1 of Amoebophilus asiaticus (strain 5a2).